The sequence spans 320 residues: Ribonuclease Z (320 aa).

Positions 62, 64, 66, 67, 139, 210, and 268 each coordinate Zn(2+). The active-site Proton acceptor is Asp-66.

This sequence belongs to the RNase Z family. In terms of assembly, homodimer. Requires Zn(2+) as cofactor.

The enzyme catalyses Endonucleolytic cleavage of RNA, removing extra 3' nucleotides from tRNA precursor, generating 3' termini of tRNAs. A 3'-hydroxy group is left at the tRNA terminus and a 5'-phosphoryl group is left at the trailer molecule.. In terms of biological role, zinc phosphodiesterase, which displays some tRNA 3'-processing endonuclease activity. Probably involved in tRNA maturation, by removing a 3'-trailer from precursor tRNA. The chain is Ribonuclease Z from Cyanothece sp. (strain PCC 7425 / ATCC 29141).